The following is a 161-amino-acid chain: uncharacterized protein (161 aa).

This is an uncharacterized protein from Schizosaccharomyces pombe (strain 972 / ATCC 24843) (Fission yeast).